Consider the following 160-residue polypeptide: Putative control protein C.MjaVP (160 aa).

In terms of biological role, may be involved in control of expression of the type II restriction enzyme MjaV and/or its methyltransferase M.MjaV. The polypeptide is Putative control protein C.MjaVP (Methanocaldococcus jannaschii (strain ATCC 43067 / DSM 2661 / JAL-1 / JCM 10045 / NBRC 100440) (Methanococcus jannaschii)).